We begin with the raw amino-acid sequence, 454 residues long: Bifunctional protein GlmU (454 aa).

Positions 1–226 are pyrophosphorylase; it reads MTTTVIILAA…AFEVEGVNDR (226 aa). Residues 8 to 11, lysine 22, glutamine 73, 78 to 79, 100 to 102, glycine 137, glutamate 151, asparagine 166, and asparagine 224 each bind UDP-N-acetyl-alpha-D-glucosamine; these read LAAG, GT, and YGD. Position 102 (aspartate 102) interacts with Mg(2+). Residue asparagine 224 coordinates Mg(2+). Residues 227–247 are linker; sequence LQLAALEREFQLQQAKSLMQQ. The N-acetyltransferase stretch occupies residues 248 to 454; it reads GVTLTDPSRF…NYQRPQKLKK (207 aa). Residues arginine 330 and lysine 348 each contribute to the UDP-N-acetyl-alpha-D-glucosamine site. Residue histidine 360 is the Proton acceptor of the active site. 2 residues coordinate UDP-N-acetyl-alpha-D-glucosamine: tyrosine 363 and asparagine 374. Acetyl-CoA-binding positions include alanine 377, 383–384, serine 402, alanine 420, and arginine 437; that span reads NY.

This sequence in the N-terminal section; belongs to the N-acetylglucosamine-1-phosphate uridyltransferase family. In the C-terminal section; belongs to the transferase hexapeptide repeat family. In terms of assembly, homotrimer. Requires Mg(2+) as cofactor.

Its subcellular location is the cytoplasm. It carries out the reaction alpha-D-glucosamine 1-phosphate + acetyl-CoA = N-acetyl-alpha-D-glucosamine 1-phosphate + CoA + H(+). It catalyses the reaction N-acetyl-alpha-D-glucosamine 1-phosphate + UTP + H(+) = UDP-N-acetyl-alpha-D-glucosamine + diphosphate. The protein operates within nucleotide-sugar biosynthesis; UDP-N-acetyl-alpha-D-glucosamine biosynthesis; N-acetyl-alpha-D-glucosamine 1-phosphate from alpha-D-glucosamine 6-phosphate (route II): step 2/2. It functions in the pathway nucleotide-sugar biosynthesis; UDP-N-acetyl-alpha-D-glucosamine biosynthesis; UDP-N-acetyl-alpha-D-glucosamine from N-acetyl-alpha-D-glucosamine 1-phosphate: step 1/1. Its pathway is bacterial outer membrane biogenesis; LPS lipid A biosynthesis. Catalyzes the last two sequential reactions in the de novo biosynthetic pathway for UDP-N-acetylglucosamine (UDP-GlcNAc). The C-terminal domain catalyzes the transfer of acetyl group from acetyl coenzyme A to glucosamine-1-phosphate (GlcN-1-P) to produce N-acetylglucosamine-1-phosphate (GlcNAc-1-P), which is converted into UDP-GlcNAc by the transfer of uridine 5-monophosphate (from uridine 5-triphosphate), a reaction catalyzed by the N-terminal domain. In Acinetobacter baylyi (strain ATCC 33305 / BD413 / ADP1), this protein is Bifunctional protein GlmU.